A 107-amino-acid chain; its full sequence is uncharacterized protein (107 aa).

The segment at lysine 87 to tryptophan 107 is disordered.

This is an uncharacterized protein from Saccharomyces cerevisiae (strain ATCC 204508 / S288c) (Baker's yeast).